The primary structure comprises 217 residues: Uridylate kinase (217 aa).

6–10 (KLSGR) lines the ATP pocket. Gly-38 contributes to the UMP binding site. ATP-binding residues include Gly-39 and Arg-43. Residues Asp-60 and 107–113 (FQPGQST) contribute to the UMP site. Residues Asn-134, Tyr-139, and Asp-142 each contribute to the ATP site.

Belongs to the UMP kinase family. As to quaternary structure, homohexamer.

The protein resides in the cytoplasm. It carries out the reaction UMP + ATP = UDP + ADP. It participates in pyrimidine metabolism; CTP biosynthesis via de novo pathway; UDP from UMP (UMPK route): step 1/1. With respect to regulation, inhibited by UTP. Catalyzes the reversible phosphorylation of UMP to UDP. This is Uridylate kinase from Pyrobaculum aerophilum (strain ATCC 51768 / DSM 7523 / JCM 9630 / CIP 104966 / NBRC 100827 / IM2).